Reading from the N-terminus, the 90-residue chain is Phosphocarrier protein NPr (90 aa).

The region spanning 2–90 is the HPr domain; it reads TVKQTVEITN…ALFNSGFDED (89 aa). The active-site Pros-phosphohistidine intermediate is histidine 16.

Belongs to the HPr family.

It is found in the cytoplasm. Component of the phosphoenolpyruvate-dependent nitrogen-metabolic phosphotransferase system (nitrogen-metabolic PTS), that seems to be involved in regulating nitrogen metabolism. The phosphoryl group from phosphoenolpyruvate (PEP) is transferred to the phosphoryl carrier protein NPr by enzyme I-Ntr. Phospho-NPr then transfers it to EIIA-Ntr. Could function in the transcriptional regulation of sigma-54 dependent operons in conjunction with the NPr (PtsO) and EIIA-Ntr (PtsN) proteins. The sequence is that of Phosphocarrier protein NPr (ptsO) from Escherichia coli O157:H7.